Reading from the N-terminus, the 723-residue chain is Catalase-peroxidase (723 aa).

Positions 96-224 form a cross-link, tryptophyl-tyrosyl-methioninium (Trp-Tyr) (with M-250); that stretch reads WHAAGTYRIQ…LAAVQMGLIY (129 aa). His97 acts as the Proton acceptor in catalysis. The segment at residues 224–250 is a cross-link (tryptophyl-tyrosyl-methioninium (Tyr-Met) (with W-96)); that stretch reads YVNPEGVNSQPDPIKTGEQVRVTFARM. His265 serves as a coordination point for heme b.

Belongs to the peroxidase family. Peroxidase/catalase subfamily. As to quaternary structure, homodimer or homotetramer. Heme b serves as cofactor. In terms of processing, formation of the three residue Trp-Tyr-Met cross-link is important for the catalase, but not the peroxidase activity of the enzyme.

The enzyme catalyses H2O2 + AH2 = A + 2 H2O. The catalysed reaction is 2 H2O2 = O2 + 2 H2O. Bifunctional enzyme with both catalase and broad-spectrum peroxidase activity. The polypeptide is Catalase-peroxidase (Marinobacter nauticus (strain ATCC 700491 / DSM 11845 / VT8) (Marinobacter aquaeolei)).